The sequence spans 110 residues: NADH-quinone oxidoreductase subunit K (110 aa).

3 helical membrane passes run leucine 13–methionine 33, isoleucine 41–valine 61, and isoleucine 73–tyrosine 93.

Belongs to the complex I subunit 4L family. NDH-1 is composed of 14 different subunits. Subunits NuoA, H, J, K, L, M, N constitute the membrane sector of the complex.

The protein resides in the cell inner membrane. The enzyme catalyses a quinone + NADH + 5 H(+)(in) = a quinol + NAD(+) + 4 H(+)(out). Its function is as follows. NDH-1 shuttles electrons from NADH, via FMN and iron-sulfur (Fe-S) centers, to quinones in the respiratory chain. The immediate electron acceptor for the enzyme in this species is believed to be ubiquinone. Couples the redox reaction to proton translocation (for every two electrons transferred, four hydrogen ions are translocated across the cytoplasmic membrane), and thus conserves the redox energy in a proton gradient. The chain is NADH-quinone oxidoreductase subunit K from Rickettsia typhi (strain ATCC VR-144 / Wilmington).